Reading from the N-terminus, the 334-residue chain is tRNA-dihydrouridine(20/20a) synthase (334 aa).

FMN contacts are provided by residues 17 to 19 (PMM) and Q70. The Proton donor role is filled by C100. FMN is bound by residues K139, H171, 211–213 (NGG), and 233–234 (GR).

Belongs to the Dus family. DusA subfamily. Requires FMN as cofactor.

The catalysed reaction is 5,6-dihydrouridine(20) in tRNA + NADP(+) = uridine(20) in tRNA + NADPH + H(+). It catalyses the reaction 5,6-dihydrouridine(20) in tRNA + NAD(+) = uridine(20) in tRNA + NADH + H(+). It carries out the reaction 5,6-dihydrouridine(20a) in tRNA + NADP(+) = uridine(20a) in tRNA + NADPH + H(+). The enzyme catalyses 5,6-dihydrouridine(20a) in tRNA + NAD(+) = uridine(20a) in tRNA + NADH + H(+). Its function is as follows. Catalyzes the synthesis of 5,6-dihydrouridine (D), a modified base found in the D-loop of most tRNAs, via the reduction of the C5-C6 double bond in target uridines. Specifically modifies U20 and U20a in tRNAs. In Synechocystis sp. (strain ATCC 27184 / PCC 6803 / Kazusa), this protein is tRNA-dihydrouridine(20/20a) synthase (dus2).